Here is a 447-residue protein sequence, read N- to C-terminus: Large ribosomal subunit protein bL27m (447 aa).

2 stretches are compositionally biased toward basic and acidic residues: residues 377–402 and 409–447; these read QREA…KAEK and KVEK…EKKD. A disordered region spans residues 377 to 447; it reads QREAKKAREG…KKDSKTEKKD (71 aa).

Belongs to the bacterial ribosomal protein bL27 family. As to quaternary structure, component of the mitochondrial large ribosomal subunit (mt-LSU). Mature N.crassa 74S mitochondrial ribosomes consist of a small (37S) and a large (54S) subunit. The 37S small subunit contains a 16S ribosomal RNA (16S mt-rRNA) and 32 different proteins. The 54S large subunit contains a 23S rRNA (23S mt-rRNA) and 42 different proteins.

It localises to the mitochondrion. Component of the mitochondrial ribosome (mitoribosome), a dedicated translation machinery responsible for the synthesis of mitochondrial genome-encoded proteins, including at least some of the essential transmembrane subunits of the mitochondrial respiratory chain. The mitoribosomes are attached to the mitochondrial inner membrane and translation products are cotranslationally integrated into the membrane. In Neurospora crassa (strain ATCC 24698 / 74-OR23-1A / CBS 708.71 / DSM 1257 / FGSC 987), this protein is Large ribosomal subunit protein bL27m (mrp7).